We begin with the raw amino-acid sequence, 350 residues long: Adenine deaminase (350 aa).

The Zn(2+) site is built by histidine 24, histidine 26, and histidine 207. Glutamate 210 functions as the Proton donor in the catalytic mechanism. A Zn(2+)-binding site is contributed by aspartate 288. Aspartate 289 provides a ligand contact to substrate.

Belongs to the metallo-dependent hydrolases superfamily. Adenosine and AMP deaminases family. Adenine deaminase type 2 subfamily. Zn(2+) is required as a cofactor.

It catalyses the reaction adenine + H2O + H(+) = hypoxanthine + NH4(+). Catalyzes the hydrolytic deamination of adenine to hypoxanthine. Plays an important role in the purine salvage pathway and in nitrogen catabolism. This chain is Adenine deaminase, found in Paraburkholderia xenovorans (strain LB400).